An 83-amino-acid polypeptide reads, in one-letter code: Large ribosomal subunit protein bL31 (83 aa).

The protein belongs to the bacterial ribosomal protein bL31 family. Type A subfamily. Part of the 50S ribosomal subunit.

Its function is as follows. Binds the 23S rRNA. The polypeptide is Large ribosomal subunit protein bL31 (Synechococcus sp. (strain CC9605)).